The sequence spans 347 residues: NADH-ubiquinone oxidoreductase chain 2 (347 aa).

Transmembrane regions (helical) follow at residues 3–23, 25–45, 66–86, 111–131, 149–169, 178–198, 201–221, 237–257, 274–294, and 325–345; these read PPILIAILATVMTGTMIVMLS, HWLLIWIGFEMNMLAIIPILM, ASMLLMMGVTINLLYSGQWMI, FHFWVPEVTQGISLSSGMILL, INTDLMTLVALASVLVGGWGG, IMAYSSIAHMGWMAAIIIYNP, MFLNLSLYILMTLSTFMLFML, IPLIASTILTLMLSLGGLPPL, DMIVVPTLMAITALLNLYFYM, and LLPPLIITSTMLLPIMPMMSI.

Belongs to the complex I subunit 2 family. As to quaternary structure, core subunit of respiratory chain NADH dehydrogenase (Complex I) which is composed of 45 different subunits. Interacts with TMEM242.

It is found in the mitochondrion inner membrane. The enzyme catalyses a ubiquinone + NADH + 5 H(+)(in) = a ubiquinol + NAD(+) + 4 H(+)(out). Its function is as follows. Core subunit of the mitochondrial membrane respiratory chain NADH dehydrogenase (Complex I) which catalyzes electron transfer from NADH through the respiratory chain, using ubiquinone as an electron acceptor. Essential for the catalytic activity and assembly of complex I. The protein is NADH-ubiquinone oxidoreductase chain 2 of Vulpes vulpes (Red fox).